We begin with the raw amino-acid sequence, 45 residues long: Cytochrome b559 subunit beta (45 aa).

A helical transmembrane segment spans residues 20 to 36 (WLAVHTLAVPTVFFLGA). Histidine 24 serves as a coordination point for heme.

The protein belongs to the PsbE/PsbF family. As to quaternary structure, heterodimer of an alpha subunit and a beta subunit. PSII is composed of 1 copy each of membrane proteins PsbA, PsbB, PsbC, PsbD, PsbE, PsbF, PsbH, PsbI, PsbJ, PsbK, PsbL, PsbM, PsbT, PsbX, PsbY, PsbZ, Psb30/Ycf12, peripheral proteins PsbO, CyanoQ (PsbQ), PsbU, PsbV and a large number of cofactors. It forms dimeric complexes. Heme b is required as a cofactor.

It localises to the cellular thylakoid membrane. Functionally, this b-type cytochrome is tightly associated with the reaction center of photosystem II (PSII). PSII is a light-driven water:plastoquinone oxidoreductase that uses light energy to abstract electrons from H(2)O, generating O(2) and a proton gradient subsequently used for ATP formation. It consists of a core antenna complex that captures photons, and an electron transfer chain that converts photonic excitation into a charge separation. This is Cytochrome b559 subunit beta from Trichormus variabilis (strain ATCC 29413 / PCC 7937) (Anabaena variabilis).